A 417-amino-acid polypeptide reads, in one-letter code: Indole-3-pyruvate monooxygenase YUCCA6 (417 aa).

FAD is bound at residue 36–41 (GAGPSG). Position 204–209 (204–209 (GCGNSG)) interacts with NADP(+).

It belongs to the FMO family. It depends on FAD as a cofactor. In terms of tissue distribution, highly expressed in roots but modestly expressed in the cauline leaves and flowers. Expressed in anthers.

The protein resides in the cytoplasm. It carries out the reaction indole-3-pyruvate + NADPH + O2 + H(+) = (indol-3-yl)acetate + CO2 + NADP(+) + H2O. The protein operates within plant hormone metabolism; auxin biosynthesis. In terms of biological role, involved in auxin biosynthesis via the indole-3-pyruvic acid (IPA) pathway. Also able to convert in vitro phenyl pyruvate (PPA) to phenyl acetic acid (PAA). Required for the formation of floral organs and vascular tissues. Belongs to the set of redundant YUCCA genes probably responsible for auxin biosynthesis in shoots. In Arabidopsis thaliana (Mouse-ear cress), this protein is Indole-3-pyruvate monooxygenase YUCCA6 (YUC6).